We begin with the raw amino-acid sequence, 144 residues long: MGQQRRSPLETVFLPLPSSQTTSTHAIAHFVLPACLFYSRSIFDHWGCRSKSTASTSQTRHCSVPLCWAQTQALRYHHSVHTFSFQPKYSSIYCLFHLRRKYTLSNTTPLPRWRSRCPCGSFSNVSMKQGHFSENRFELAYFTS.

This is an uncharacterized protein from Saccharomyces cerevisiae (strain ATCC 204508 / S288c) (Baker's yeast).